The sequence spans 1323 residues: Tetratricopeptide repeat protein 21 homolog (1323 aa).

TPR repeat units lie at residues 56-89 (VPLA…QNFS), 411-444 (ESPF…LIEM), 580-613 (SLYH…PKKE), 667-700 (HQLV…QSNF), 702-735 (LSRI…EPTP), 736-768 (GSYS…QSKD), 770-802 (QLAE…YKDK), 804-835 (MRLK…EPEP), 845-878 (IQFL…HNKI), 892-925 (ARIC…YETD), 927-959 (KSNL…DPHN), 961-993 (EANL…NPLH), 995-1027 (HALF…NPRC), 1031-1064 (AGYS…PNVV), 1203-1236 (EKCW…NCNS), 1238-1270 (RAFE…TNQK), and 1272-1305 (CSFG…NPQY).

The protein belongs to the TTC21 family.

This Caenorhabditis briggsae protein is Tetratricopeptide repeat protein 21 homolog.